A 305-amino-acid chain; its full sequence is Methionyl-tRNA formyltransferase (305 aa).

(6S)-5,6,7,8-tetrahydrofolate is bound at residue 108–111 (SLLP).

The protein belongs to the Fmt family.

The catalysed reaction is L-methionyl-tRNA(fMet) + (6R)-10-formyltetrahydrofolate = N-formyl-L-methionyl-tRNA(fMet) + (6S)-5,6,7,8-tetrahydrofolate + H(+). In terms of biological role, attaches a formyl group to the free amino group of methionyl-tRNA(fMet). The formyl group appears to play a dual role in the initiator identity of N-formylmethionyl-tRNA by promoting its recognition by IF2 and preventing the misappropriation of this tRNA by the elongation apparatus. The chain is Methionyl-tRNA formyltransferase from Clavibacter sepedonicus (Clavibacter michiganensis subsp. sepedonicus).